The primary structure comprises 252 residues: tRNA-cytidine(32) 2-sulfurtransferase (252 aa).

Residues 37-42 carry the PP-loop motif motif; the sequence is SGGKDS. Positions 112, 115, and 202 each coordinate [4Fe-4S] cluster.

This sequence belongs to the TtcA family. As to quaternary structure, homodimer. Mg(2+) serves as cofactor. It depends on [4Fe-4S] cluster as a cofactor.

It localises to the cytoplasm. It carries out the reaction cytidine(32) in tRNA + S-sulfanyl-L-cysteinyl-[cysteine desulfurase] + AH2 + ATP = 2-thiocytidine(32) in tRNA + L-cysteinyl-[cysteine desulfurase] + A + AMP + diphosphate + H(+). The protein operates within tRNA modification. Catalyzes the ATP-dependent 2-thiolation of cytidine in position 32 of tRNA, to form 2-thiocytidine (s(2)C32). The sulfur atoms are provided by the cysteine/cysteine desulfurase (IscS) system. The chain is tRNA-cytidine(32) 2-sulfurtransferase from Geotalea uraniireducens (strain Rf4) (Geobacter uraniireducens).